Consider the following 194-residue polypeptide: Large ribosomal subunit protein uL22 (194 aa).

This sequence belongs to the universal ribosomal protein uL22 family.

The chain is Large ribosomal subunit protein uL22 (rpl17) from Aspergillus fumigatus (strain ATCC MYA-4609 / CBS 101355 / FGSC A1100 / Af293) (Neosartorya fumigata).